The following is a 989-amino-acid chain: Bifunctional glutamine synthetase adenylyltransferase/adenylyl-removing enzyme (989 aa).

Positions 1–474 (MNSSAIDADI…HYGKLFEGDP (474 aa)) are adenylyl removase. The interval 480–989 (LPIDYAGGPD…FNRLIGGDSA (510 aa)) is adenylyl transferase.

Belongs to the GlnE family. Requires Mg(2+) as cofactor.

The enzyme catalyses [glutamine synthetase]-O(4)-(5'-adenylyl)-L-tyrosine + phosphate = [glutamine synthetase]-L-tyrosine + ADP. It carries out the reaction [glutamine synthetase]-L-tyrosine + ATP = [glutamine synthetase]-O(4)-(5'-adenylyl)-L-tyrosine + diphosphate. Functionally, involved in the regulation of glutamine synthetase GlnA, a key enzyme in the process to assimilate ammonia. When cellular nitrogen levels are high, the C-terminal adenylyl transferase (AT) inactivates GlnA by covalent transfer of an adenylyl group from ATP to specific tyrosine residue of GlnA, thus reducing its activity. Conversely, when nitrogen levels are low, the N-terminal adenylyl removase (AR) activates GlnA by removing the adenylyl group by phosphorolysis, increasing its activity. The regulatory region of GlnE binds the signal transduction protein PII (GlnB) which indicates the nitrogen status of the cell. This Rhodopseudomonas palustris (strain BisB5) protein is Bifunctional glutamine synthetase adenylyltransferase/adenylyl-removing enzyme.